The primary structure comprises 512 residues: tRNA modification GTPase gtpbp3, mitochondrial (512 aa).

The TrmE-type G domain occupies 246 to 434 (GANIAIVGPP…LLNLLKLNLK (189 aa)). Residues 253–260 (GPPNAGKS), 300–304 (DTAGL), and 375–378 (NKSD) contribute to the GTP site.

This sequence belongs to the TRAFAC class TrmE-Era-EngA-EngB-Septin-like GTPase superfamily. TrmE GTPase family.

The protein resides in the mitochondrion. Its function is as follows. GTPase involved in the 5-carboxymethylaminomethyl modification (mnm(5)s(2)U34) of the wobble uridine base in mitochondrial tRNAs. The sequence is that of tRNA modification GTPase gtpbp3, mitochondrial (gtpbp3) from Dictyostelium discoideum (Social amoeba).